The sequence spans 37 residues: Cytochrome b6-f complex subunit 5 (37 aa).

A helical membrane pass occupies residues 5–25 (LLCGIVLGLIPITLAGLFVAA).

It belongs to the PetG family. The 4 large subunits of the cytochrome b6-f complex are cytochrome b6, subunit IV (17 kDa polypeptide, PetD), cytochrome f and the Rieske protein, while the 4 small subunits are PetG, PetL, PetM and PetN. The complex functions as a dimer.

It localises to the cellular thylakoid membrane. Functionally, component of the cytochrome b6-f complex, which mediates electron transfer between photosystem II (PSII) and photosystem I (PSI), cyclic electron flow around PSI, and state transitions. PetG is required for either the stability or assembly of the cytochrome b6-f complex. The sequence is that of Cytochrome b6-f complex subunit 5 from Cyanothece sp. (strain PCC 7425 / ATCC 29141).